The sequence spans 118 residues: Small ribosomal subunit protein uS13 (118 aa).

Residues 94–118 (GLPVRGQRTKTNARTRKGPRKPIKK) form a disordered region.

The protein belongs to the universal ribosomal protein uS13 family. As to quaternary structure, part of the 30S ribosomal subunit. Forms a loose heterodimer with protein S19. Forms two bridges to the 50S subunit in the 70S ribosome.

Functionally, located at the top of the head of the 30S subunit, it contacts several helices of the 16S rRNA. In the 70S ribosome it contacts the 23S rRNA (bridge B1a) and protein L5 of the 50S subunit (bridge B1b), connecting the 2 subunits; these bridges are implicated in subunit movement. Contacts the tRNAs in the A and P-sites. This chain is Small ribosomal subunit protein uS13, found in Tolumonas auensis (strain DSM 9187 / NBRC 110442 / TA 4).